The primary structure comprises 280 residues: uncharacterized protein (280 aa).

Residues N75, N98, N107, N143, N158, N170, N192, N207, N224, and N230 are each glycosylated (N-linked (GlcNAc...) asparagine; by host). The chain crosses the membrane as a helical span at residues 235-255 (AFTYGSWGVAMLLFAAVMVLV).

The protein belongs to the RL11 family.

It is found in the host membrane. This is an uncharacterized protein from Human cytomegalovirus (strain Merlin) (HHV-5).